A 240-amino-acid chain; its full sequence is Ribosomal RNA small subunit methyltransferase G (240 aa).

S-adenosyl-L-methionine is bound by residues Gly79, Phe84, Ala130–Glu131, and Arg149.

This sequence belongs to the methyltransferase superfamily. RNA methyltransferase RsmG family.

The protein resides in the cytoplasm. Its function is as follows. Specifically methylates the N7 position of a guanine in 16S rRNA. The polypeptide is Ribosomal RNA small subunit methyltransferase G (Desulforamulus reducens (strain ATCC BAA-1160 / DSM 100696 / MI-1) (Desulfotomaculum reducens)).